Here is an 841-residue protein sequence, read N- to C-terminus: SLIT and NTRK-like protein 6 (841 aa).

An N-terminal signal peptide occupies residues 1-26; it reads MKLWIHLFYSSLLACISLHSQTPVLS. The LRRNT 1 domain maps to 27–67; it reads SRGSCDSLCNCEEKDGTMLINCEAKGIKMVSEISVPPSRPF. The Extracellular portion of the chain corresponds to 27 to 608; sequence SRGSCDSLCN…RSLTDAVPLS (582 aa). LRR repeat units follow at residues 89-110, 113-134, 137-158, 161-182, and 184-205; these read NAIS…AFNG, LLKQ…TFHG, NLEF…AFSK, RLKV…IFRF, and PLTH…GFLE. In terms of domain architecture, LRRCT 1 spans 218 to 269; that stretch reads NKWACNCDLLQLKTWLENMPPQSIIGDVVCNSPPFFKGSILSRLKKESICPT. Residues 320-361 enclose the LRRNT 2 domain; the sequence is PSTQLPGPYCPIPCNCKVLSPSGLLIHCQERNIESLSDLRPP. LRR repeat units lie at residues 364–385, 388–409, 412–433, 436–457, 460–481, and 483–504; these read NPRK…DLVE, TLEM…SFMN, RLQK…MFLG, NLEY…TFNP, KLKV…IFSG, and PLTK…NILD. Positions 517 to 568 constitute an LRRCT 2 domain; that stretch reads NPWDCSCDLVGLQQWIQKLSKNTVTDDILCTSPGHLDKKELKALNSEILCPG. The chain crosses the membrane as a helical span at residues 609-629; it reads VLILGLLIMFITIVFCAAGIV. Residues 630–841 are Cytoplasmic-facing; that stretch reads VLVLHRRRRY…DYLEVLEQQT (212 aa).

Belongs to the SLITRK family. As to expression, in adult brain, highly expressed in putamen with no expression in cerebral cortex. Expressed in adult and fetal lung and fetal liver. Also expressed at high levels in some brain tumors including medulloblastomas and primitive neuroectodermal tumors.

The protein localises to the cell membrane. Regulator of neurite outgrowth required for normal hearing and vision. The polypeptide is SLIT and NTRK-like protein 6 (SLITRK6) (Homo sapiens (Human)).